A 341-amino-acid chain; its full sequence is MLVLGIESSCDETGVALYDTERGLLAHQLHTQMAMHAEYGGVVPELASRDHIRRAIPLTEACLSEAGKKLADLDAIAYTQGPGLGGALMVGASMANALAFGLNIPVIPVHHLEGHLLSPLLADPKPEFPFLALLVSGGHTQLMAVRGVGDYEILGETVDDAAGEAFDKTAKLLGLPYPGGPLLSRLAESGSPDRFTLPRPMLHSGNLDMSFSGLKTAVLTLVRQQESAQGELDEQTRMDICRAFQEAIVEVLVKKSLAAMRQAGMKRLVVAGGVGANKQLRAALNDAAARKRFDVFYPPLALCTDNGAMIAFAGAMRLKFAEPAGGFTIKPRWDLSSLPAV.

Residues His-111 and His-115 each contribute to the Fe cation site. Residues 134–138 (LVSGG), Asp-167, Gly-180, and Asn-277 each bind substrate. Residue Asp-305 coordinates Fe cation.

It belongs to the KAE1 / TsaD family. The cofactor is Fe(2+).

The protein localises to the cytoplasm. The enzyme catalyses L-threonylcarbamoyladenylate + adenosine(37) in tRNA = N(6)-L-threonylcarbamoyladenosine(37) in tRNA + AMP + H(+). Functionally, required for the formation of a threonylcarbamoyl group on adenosine at position 37 (t(6)A37) in tRNAs that read codons beginning with adenine. Is involved in the transfer of the threonylcarbamoyl moiety of threonylcarbamoyl-AMP (TC-AMP) to the N6 group of A37, together with TsaE and TsaB. TsaD likely plays a direct catalytic role in this reaction. This chain is tRNA N6-adenosine threonylcarbamoyltransferase, found in Chromobacterium violaceum (strain ATCC 12472 / DSM 30191 / JCM 1249 / CCUG 213 / NBRC 12614 / NCIMB 9131 / NCTC 9757 / MK).